The chain runs to 322 residues: Deoxyhypusine hydroxylase (322 aa).

Fe cation-binding residues include His-78, Glu-79, His-111, and Glu-112. 4 HEAT-like PBS-type repeats span residues 109 to 135 (VRHEAAEALGALGDKDSLEDLEKCLKN), 203 to 229 (LRYRAMFRLRDIGTDEAVLALASGFND), 234 to 260 (FKHEIAYVFGQMGSTAAVPSLTEVLGR), and 267 to 293 (VRHEAAEALGAIASEDALPILKQYLND). Fe cation is bound by residues His-236, Glu-237, His-269, and Glu-270.

The protein belongs to the deoxyhypusine hydroxylase family. Fe(2+) serves as cofactor.

It is found in the cytoplasm. Its subcellular location is the nucleus. It catalyses the reaction [eIF5A protein]-deoxyhypusine + AH2 + O2 = [eIF5A protein]-hypusine + A + H2O. The protein operates within protein modification; eIF5A hypusination. In terms of biological role, catalyzes the hydroxylation of the N(6)-(4-aminobutyl)-L-lysine intermediate to form hypusine, an essential post-translational modification only found in mature eIF-5A factor. The sequence is that of Deoxyhypusine hydroxylase from Candida glabrata (strain ATCC 2001 / BCRC 20586 / JCM 3761 / NBRC 0622 / NRRL Y-65 / CBS 138) (Yeast).